The following is an 847-amino-acid chain: Leucine--tRNA ligase (847 aa).

A 'HIGH' region motif is present at residues Pro41 to His51. The 'KMSKS' region signature appears at Lys619–Ser623. Residue Lys622 participates in ATP binding.

Belongs to the class-I aminoacyl-tRNA synthetase family.

The protein resides in the cytoplasm. The catalysed reaction is tRNA(Leu) + L-leucine + ATP = L-leucyl-tRNA(Leu) + AMP + diphosphate. In Cereibacter sphaeroides (strain ATCC 17023 / DSM 158 / JCM 6121 / CCUG 31486 / LMG 2827 / NBRC 12203 / NCIMB 8253 / ATH 2.4.1.) (Rhodobacter sphaeroides), this protein is Leucine--tRNA ligase.